A 154-amino-acid chain; its full sequence is Protein disulfide-isomerase LQY1, chloroplastic (154 aa).

The N-terminal 43 residues, 1–43 (MPVSAPSPPRLHSPFIHCPINFTPSSFSARNLRSPSTSYPRIK), are a transit peptide targeting the chloroplast. A helical transmembrane segment spans residues 51–71 (VVAISVGVASVALGIGIPVFY). The segment at 77–147 (NAAKRENTQP…SGVQPRYLDR (71 aa)) adopts a CR-type zinc-finger fold. Zn(2+)-binding residues include Cys87, Cys90, Cys98, Cys101, Cys121, Cys124, Cys132, and Cys135.

The protein belongs to the BSD2 chaperone family. As to quaternary structure, interacts with the photosystem II core subunits. Interacts with HHL1. Requires Zn(2+) as cofactor.

It localises to the plastid. The protein localises to the chloroplast thylakoid membrane. It carries out the reaction Catalyzes the rearrangement of -S-S- bonds in proteins.. Functionally, protein disulfide-isomerase probably involved upon formation of a complex with HHL1 in maintaining photosystem II (PSII) activity under high light by regulating repair and reassembly of PSII complexes. In Arabidopsis thaliana (Mouse-ear cress), this protein is Protein disulfide-isomerase LQY1, chloroplastic.